Consider the following 271-residue polypeptide: Ribosomal RNA small subunit methyltransferase A (271 aa).

The S-adenosyl-L-methionine site is built by asparagine 22, leucine 24, glycine 49, glutamate 70, aspartate 96, and asparagine 116.

It belongs to the class I-like SAM-binding methyltransferase superfamily. rRNA adenine N(6)-methyltransferase family. RsmA subfamily.

The protein localises to the cytoplasm. It carries out the reaction adenosine(1518)/adenosine(1519) in 16S rRNA + 4 S-adenosyl-L-methionine = N(6)-dimethyladenosine(1518)/N(6)-dimethyladenosine(1519) in 16S rRNA + 4 S-adenosyl-L-homocysteine + 4 H(+). Specifically dimethylates two adjacent adenosines (A1518 and A1519) in the loop of a conserved hairpin near the 3'-end of 16S rRNA in the 30S particle. May play a critical role in biogenesis of 30S subunits. The sequence is that of Ribosomal RNA small subunit methyltransferase A from Sphingopyxis alaskensis (strain DSM 13593 / LMG 18877 / RB2256) (Sphingomonas alaskensis).